Consider the following 468-residue polypeptide: 6-phospho-beta-galactosidase (468 aa).

Gln-19, His-116, Asn-159, Glu-160, and Asn-297 together coordinate D-galactose 6-phosphate. Glu-160 acts as the Proton donor in catalysis. Glu-375 functions as the Nucleophile in the catalytic mechanism. Ser-428, Trp-429, Lys-435, and Tyr-437 together coordinate D-galactose 6-phosphate.

Belongs to the glycosyl hydrolase 1 family.

It catalyses the reaction a 6-phospho-beta-D-galactoside + H2O = D-galactose 6-phosphate + an alcohol. It participates in carbohydrate metabolism; lactose degradation; D-galactose 6-phosphate and beta-D-glucose from lactose 6-phosphate: step 1/1. This chain is 6-phospho-beta-galactosidase, found in Streptococcus pyogenes serotype M3 (strain ATCC BAA-595 / MGAS315).